We begin with the raw amino-acid sequence, 1074 residues long: Insulin receptor substrate 2-A (1074 aa).

Residues 1–64 (MAGVLCPTEE…PPASAAEDDV (64 aa)) are disordered. 2 short sequence motifs (YXXM motif) span residues 33–36 (YRRM) and 145–148 (YFAM). A PH domain is found at 63–168 (DVRKRGYLRK…WYQALSELIN (106 aa)). Residues 193-297 (FKEVWQVNVK…DTMKALKAYS (105 aa)) enclose the IRS-type PTB domain. Disordered regions lie at residues 326 to 370 (PPSQ…RPFR), 426 to 461 (CSSSGHGSASETLTRPSSSSVCGSPSDGGFISSDEY), and 475 to 510 (SNTPDSLGNTPPIQEENTLSDYMSMSTHSQPDSRDD). Polar residues predominate over residues 347-361 (SAKNNSFRFRTSSEG). 2 stretches are compositionally biased toward low complexity: residues 426-435 (CSSSGHGSAS) and 442-454 (SSSSVCGSPSDGG). Polar residues predominate over residues 475–504 (SNTPDSLGNTPPIQEENTLSDYMSMSTHSQ). 6 short sequence motifs (YXXM motif) span residues 496–499 (YMSM), 592–595 (YMPM), 605–608 (YLPM), 631–634 (YMMM), 663–666 (YMDM), and 710–713 (YVPM). The interval 801–821 (TPYSLSADGSPSSLGSSCDHR) is disordered. Residues 804–817 (SLSADGSPSSLGSS) are compositionally biased toward low complexity. The short motif at 888–891 (YTTM) is the YXXM motif 9 element.

Phosphorylated by INSR.

In terms of biological role, potentiates insulin signaling. This Xenopus laevis (African clawed frog) protein is Insulin receptor substrate 2-A (irs2-a).